Consider the following 706-residue polypeptide: G2/M phase-specific E3 ubiquitin-protein ligase (706 aa).

Residues 11–51 (NLACVFCRKNDDCPNKYGEKKTKEKWNLTVHYYCLLMSSGI) form a C2HC pre-PHD-type zinc finger. The segment at 79–128 (LKCCVCKKNGASIGCVAPRCKRSYHFPCGLQRECIFQFTGNFASFCWNHR) adopts a PHD-type 1 zinc-finger fold. A PHD-type 2; degenerate zinc finger spans residues 143–193 (PCTICLEFIEPIPSYNILRSPCCKNAWFHRDCLQVQAINAGVFFFRCTICS). The PHD-type 3 zinc finger occupies 237-286 (RCRCKEGRDYNAPDSKWEIKRCQCCGSSGTHLACSSLRSWEQNWECLECR). Residues 371-698 (IWTSALDAFR…IRNTLKLEKE (328 aa)) enclose the HECT domain.

It is found in the nucleus. The protein resides in the nucleolus. The protein localises to the cytoplasm. It carries out the reaction S-ubiquitinyl-[E2 ubiquitin-conjugating enzyme]-L-cysteine + [acceptor protein]-L-lysine = [E2 ubiquitin-conjugating enzyme]-L-cysteine + N(6)-ubiquitinyl-[acceptor protein]-L-lysine.. Its pathway is protein modification; protein ubiquitination. Functionally, E3 ubiquitin-protein ligase which accepts ubiquitin from an E2 ubiquitin-conjugating enzyme in the form of a thioester and then directly transfers the ubiquitin to targeted substrates. Essential in early embryonic development to prevent apoptotic death. The protein is G2/M phase-specific E3 ubiquitin-protein ligase (G2E3) of Macaca fascicularis (Crab-eating macaque).